The chain runs to 838 residues: Outer membrane usher protein YraJ (838 aa).

A signal peptide spans 1 to 40; it reads MPQRHHQGHKRTPKQLALIIKRCLPMVLTGSGMLCTTANA. An intrachain disulfide couples Cys815 to Cys837.

This sequence belongs to the fimbrial export usher family.

The protein localises to the cell outer membrane. Its function is as follows. Part of the yraHIJK fimbrial operon. Could contribute to adhesion to various surfaces in specific environmental niches. Increases adhesion to eukaryotic T24 bladder epithelial cells in the absence of fim operon. Probably involved in the export and assembly of fimbrial subunits across the outer membrane. In Escherichia coli (strain K12), this protein is Outer membrane usher protein YraJ (yraJ).